Here is a 318-residue protein sequence, read N- to C-terminus: Aspartate carbamoyltransferase catalytic subunit (318 aa).

The carbamoyl phosphate site is built by Arg54 and Thr55. Lys82 is a binding site for L-aspartate. 3 residues coordinate carbamoyl phosphate: Arg104, His134, and Gln137. L-aspartate is bound by residues Arg174 and Arg230. Carbamoyl phosphate is bound by residues Gly271 and Pro272.

It belongs to the aspartate/ornithine carbamoyltransferase superfamily. ATCase family. As to quaternary structure, heterododecamer (2C3:3R2) of six catalytic PyrB chains organized as two trimers (C3), and six regulatory PyrI chains organized as three dimers (R2).

The enzyme catalyses carbamoyl phosphate + L-aspartate = N-carbamoyl-L-aspartate + phosphate + H(+). The protein operates within pyrimidine metabolism; UMP biosynthesis via de novo pathway; (S)-dihydroorotate from bicarbonate: step 2/3. Functionally, catalyzes the condensation of carbamoyl phosphate and aspartate to form carbamoyl aspartate and inorganic phosphate, the committed step in the de novo pyrimidine nucleotide biosynthesis pathway. This is Aspartate carbamoyltransferase catalytic subunit from Clavibacter michiganensis subsp. michiganensis (strain NCPPB 382).